Reading from the N-terminus, the 86-residue chain is Small ribosomal subunit protein bS20 (86 aa).

This sequence belongs to the bacterial ribosomal protein bS20 family.

Binds directly to 16S ribosomal RNA. The sequence is that of Small ribosomal subunit protein bS20 from Rhodococcus erythropolis (strain PR4 / NBRC 100887).